Consider the following 1415-residue polypeptide: DNA-directed RNA polymerase subunit beta' (1415 aa).

Zn(2+)-binding residues include C72, C74, C87, and C90. Mg(2+) is bound by residues D463, D465, and D467. The Zn(2+) site is built by C811, C885, C892, and C895.

The protein belongs to the RNA polymerase beta' chain family. In terms of assembly, the RNAP catalytic core consists of 2 alpha, 1 beta, 1 beta' and 1 omega subunit. When a sigma factor is associated with the core the holoenzyme is formed, which can initiate transcription. It depends on Mg(2+) as a cofactor. The cofactor is Zn(2+).

The catalysed reaction is RNA(n) + a ribonucleoside 5'-triphosphate = RNA(n+1) + diphosphate. Functionally, DNA-dependent RNA polymerase catalyzes the transcription of DNA into RNA using the four ribonucleoside triphosphates as substrates. The polypeptide is DNA-directed RNA polymerase subunit beta' (Cereibacter sphaeroides (strain ATCC 17025 / ATH 2.4.3) (Rhodobacter sphaeroides)).